Here is a 306-residue protein sequence, read N- to C-terminus: GTP-binding protein RAD (306 aa).

A compositionally biased stretch (gly residues) spans 1–13 (MTLNGGSGAGGSR). Residues 1–91 (MTLNGGSGAG…GDSGSEDGVY (91 aa)) form a disordered region. Position 23 is an omega-N-methylarginine (arginine 23). Serine 25 is subject to Phosphoserine. The segment covering 56–88 (AATAAGTRTQGQRLDWPEGSSDSLSSGDSGSED) has biased composition (low complexity). GTP is bound by residues 97–104 (GAPGVGKS) and 201–204 (NKSD). Positions 276–295 (AKLFLGRIVARNSRKMAFLA) are calmodulin-binding.

It belongs to the small GTPase superfamily. RGK family. As to quaternary structure, interacts with Calmodulin preferentially in the inactive, GDP-bound form. Interacts with CAMK2D. Interacts with CACNB2; interaction may be involved in beta-adrenergic regulation of heart rate and contractile force. Interaction with CACNB2 regulates the trafficking of CACNA1C to the cell membrane.

The protein resides in the cell membrane. In terms of biological role, may regulate basal voltage-dependent L-type Ca(2+) currents and be required for beta-adrenergic augmentation of Ca(2+) influx in cardiomyocytes, thereby regulating increases in heart rate and contractile force. May play an important role in cardiac antiarrhythmia via the strong suppression of voltage-dependent L-type Ca(2+) currents. Regulates voltage-gated L-type calcium channel subunit alpha-1C trafficking to the cell membrane. Inhibits cardiac hypertrophy through the calmodulin-dependent kinase II (CaMKII) pathway. Inhibits phosphorylation and activation of CAMK2D. In Rattus norvegicus (Rat), this protein is GTP-binding protein RAD (Rrad).